The following is a 240-amino-acid chain: 2,3,4,5-tetrahydropyridine-2,6-dicarboxylate N-acetyltransferase (240 aa).

Belongs to the transferase hexapeptide repeat family. DapH subfamily.

The catalysed reaction is (S)-2,3,4,5-tetrahydrodipicolinate + acetyl-CoA + H2O = L-2-acetamido-6-oxoheptanedioate + CoA. It participates in amino-acid biosynthesis; L-lysine biosynthesis via DAP pathway; LL-2,6-diaminopimelate from (S)-tetrahydrodipicolinate (acetylase route): step 1/3. In terms of biological role, catalyzes the transfer of an acetyl group from acetyl-CoA to tetrahydrodipicolinate. This Bacillus cereus (strain AH187) protein is 2,3,4,5-tetrahydropyridine-2,6-dicarboxylate N-acetyltransferase.